The primary structure comprises 66 residues: Neurotoxin BmK AGP-SYPU1 (66 aa).

The 63-residue stretch at 2–64 folds into the LCN-type CS-alpha/beta domain; the sequence is RDAYIAQNYN…KPIRIPGKCH (63 aa). Intrachain disulfides connect C12–C63, C16–C36, C22–C46, and C26–C48. Residues 65 to 66 constitute a propeptide, removed by a carboxypeptidase; sequence RR.

Expressed by the venom gland.

It is found in the secreted. In terms of biological role, alpha toxins bind voltage-independently at site-3 of sodium channels (Nav) and inhibit the inactivation of the activated channels, thereby blocking neuronal transmission. This toxin has a strong analgesic effect when administered to mice by intraperitoneal injection. The chain is Neurotoxin BmK AGP-SYPU1 from Olivierus martensii (Manchurian scorpion).